A 208-amino-acid chain; its full sequence is MNNLQEQLIALGGVFQAAVLVDRIARTGQASEANIGCMLGSLLVRDPKDTLEVFGGDDLNLRDGYRALVGALERDPSSLQREPLRYALSMLGLERQLNKRGDMLDIIGNRLPQIQSQADHFGLVHENVIASSGALYQDTLSTLRQRIQVHGDMRFLQQASNASKIRALLLAGIRAARLWRQLGGHRWQLVFSRRKLLKELYGMMRTTD.

It belongs to the HflD family.

The protein resides in the cytoplasm. The protein localises to the cell inner membrane. The polypeptide is High frequency lysogenization protein HflD homolog (Pseudomonas entomophila (strain L48)).